A 307-amino-acid polypeptide reads, in one-letter code: Ubiquitin recognition factor in ER-associated degradation protein 1 (307 aa).

Met-1 bears the N-acetylmethionine mark. A phosphoserine mark is found at Ser-129, Ser-231, Ser-245, Ser-247, and Ser-299. Disordered stretches follow at residues 230-255 and 288-307; these read GSGN…GDIK and GRFI…GRKP.

It belongs to the UFD1 family. In terms of assembly, heterodimer with NPLOC4, this heterodimer binds VCP and inhibits Golgi membrane fusion. Interacts with USP13. Interacts with ZFAND2B; probably through VCP.

It is found in the nucleus. The protein resides in the cytoplasm. It localises to the cytosol. It functions in the pathway protein degradation; proteasomal ubiquitin-dependent pathway. Its function is as follows. Essential component of the ubiquitin-dependent proteolytic pathway which degrades ubiquitin fusion proteins. The ternary complex containing UFD1, VCP and NPLOC4 binds ubiquitinated proteins and is necessary for the export of misfolded proteins from the ER to the cytoplasm, where they are degraded by the proteasome. The NPLOC4-UFD1-VCP complex regulates spindle disassembly at the end of mitosis and is necessary for the formation of a closed nuclear envelope. It may be involved in the development of some ectoderm-derived structures. Acts as a negative regulator of type I interferon production via the complex formed with VCP and NPLOC4, which binds to RIGI and recruits RNF125 to promote ubiquitination and degradation of RIGI. The protein is Ubiquitin recognition factor in ER-associated degradation protein 1 of Mus musculus (Mouse).